The chain runs to 306 residues: uncharacterized protein (306 aa).

Transmembrane regions (helical) follow at residues 6–26 (LLGF…PIAL), 35–55 (AQTI…ALLA), 69–89 (YAWI…LFSS), 98–118 (VAQI…VLIF), 122–142 (LGLH…LFFN), 154–174 (YSTG…YGMA), 186–206 (QILL…ADFS), 211–231 (LTPL…IGYG), 247–267 (VVIT…HYFS), and 281–301 (YIGA…HKLL). 2 EamA domains span residues 17-142 (MAWG…LFFN) and 166-296 (LIWV…LSAI).

The protein belongs to the EamA transporter family.

It is found in the cell membrane. This is an uncharacterized protein from Haemophilus influenzae (strain ATCC 51907 / DSM 11121 / KW20 / Rd).